The primary structure comprises 515 residues: Galactose/methyl galactoside import ATP-binding protein MglA (515 aa).

ABC transporter domains follow at residues 8-243 (LEMR…VGRE) and 254-499 (IPKE…AKYL). 40 to 47 (GENGAGKS) contributes to the ATP binding site.

The protein belongs to the ABC transporter superfamily. Galactose/methyl galactoside importer (TC 3.A.1.2.3) family. In terms of assembly, the complex is composed of one ATP-binding protein (MglA), two transmembrane proteins (MglC) and a solute-binding protein (MglB).

It is found in the cell membrane. It carries out the reaction D-galactose(out) + ATP + H2O = D-galactose(in) + ADP + phosphate + H(+). The catalysed reaction is methyl beta-D-galactoside(out) + ATP + H2O = methyl beta-D-galactoside(in) + ADP + phosphate + H(+). Functionally, part of the ABC transporter complex MglABC involved in galactose/methyl galactoside import. Responsible for energy coupling to the transport system. This Clostridium perfringens (strain ATCC 13124 / DSM 756 / JCM 1290 / NCIMB 6125 / NCTC 8237 / Type A) protein is Galactose/methyl galactoside import ATP-binding protein MglA.